Consider the following 336-residue polypeptide: 3-hydroxyisobutyrate dehydrogenase, mitochondrial (336 aa).

A mitochondrion-targeting transit peptide spans 1–36 (MAASLRLLGAASGLRYWSRRLRPAAGSFAAVCSRSV). Position 40-69 (40-69 (TPVGFIGLGNMGNPMAKNLMKHGYPLIIYD)) interacts with NAD(+). An N6-acetyllysine; alternate mark is found at K60 and K76. N6-succinyllysine; alternate is present on residues K60 and K76. K95 carries the post-translational modification N6-succinyllysine. NAD(+) contacts are provided by residues 103–104 (LP) and N108. K121 is modified (N6-acetyllysine). T134 serves as a coordination point for NAD(+). N6-succinyllysine is present on K141. K145 is subject to N6-acetyllysine. An N6-acetyllysine; alternate modification is found at K149. At K149 the chain carries N6-succinyllysine; alternate. Residue K209 is part of the active site. N6-acetyllysine; alternate occurs at positions 238 and 242. K238 and K242 each carry N6-succinyllysine; alternate. Residue K284 coordinates NAD(+). K297 carries the N6-succinyllysine modification. K321 is modified (N6-acetyllysine; alternate). At K321 the chain carries N6-succinyllysine; alternate.

The protein belongs to the HIBADH-related family. 3-hydroxyisobutyrate dehydrogenase subfamily. As to quaternary structure, homodimer.

Its subcellular location is the mitochondrion. The catalysed reaction is 3-hydroxy-2-methylpropanoate + NAD(+) = 2-methyl-3-oxopropanoate + NADH + H(+). The protein operates within amino-acid degradation; L-valine degradation. The chain is 3-hydroxyisobutyrate dehydrogenase, mitochondrial (HIBADH) from Pongo abelii (Sumatran orangutan).